A 473-amino-acid chain; its full sequence is MNAAVIDSHSAQDYVVADIALAGWGRKELNIAETEMPGLVQIRDEYKAQQPLKGARIAGSLHMTIQTGVLIETLKALGADVRWASCNIFSTQDHAAAAIVEAGTPVFAFKGESLDEYWEFSHRIFEWPNGEFANMILDDGGDATLLLILGSKAEKDRSVIARPTNEEEVALFKSIERHLEIDGSWYSKRLAHIKGVTEETTTGVHRLYQMEKDGRLPFPAFNVNDSVTKSKFDNLYGCRESLVDGIKRATDVMIAGKIAVVAGYGDVGKGCAQSLRGLGATVWVTEIDPICALQAAMEGYRVVTMEYAADKADIFVTATGNYHVINHDHMKAMRHNAIVCNIGHFDSEIDVASTRQYQWENIKPQVDHIIFPDGKRVILLAEGRLVNLGCATGHPSFVMSNSFTNQTLAQIELFTRGGEYANKVYVLPKHLDEKVARLHLARIGAQLSELSDDQAAYIGVSKAGPFKPDHYRY.

Positions 64, 139, and 199 each coordinate substrate. 200–202 lines the NAD(+) pocket; it reads TTT. 2 residues coordinate substrate: Lys-229 and Asp-233. NAD(+) contacts are provided by residues Asn-234, 263–268, Glu-286, Asn-321, 342–344, and Asn-387; these read GYGDVG and IGH.

This sequence belongs to the adenosylhomocysteinase family. The cofactor is NAD(+).

It localises to the cytoplasm. It catalyses the reaction S-adenosyl-L-homocysteine + H2O = L-homocysteine + adenosine. It participates in amino-acid biosynthesis; L-homocysteine biosynthesis; L-homocysteine from S-adenosyl-L-homocysteine: step 1/1. May play a key role in the regulation of the intracellular concentration of adenosylhomocysteine. This is Adenosylhomocysteinase from Burkholderia mallei (strain SAVP1).